A 110-amino-acid chain; its full sequence is Protein ripply3 (110 aa).

A WRPW motif motif is present at residues 18 to 21 (WRPW). The segment at 50-85 (HPVRLFLPRSRMQEYLSRLGSSVLASFPVQATLHFY) is ripply homology domain. A compositionally biased stretch (acidic residues) spans 87-99 (DEDSSSEEEEDEE). The interval 87 to 110 (DEDSSSEEEEDEEHANTRCRLWRP) is disordered.

It belongs to the ripply family.

It is found in the nucleus. In terms of biological role, probable transcriptional regulator involved in developmental processes. This chain is Protein ripply3 (ripply3), found in Danio rerio (Zebrafish).